The primary structure comprises 4306 residues: Cytoplasmic dynein 2 heavy chain 1 (4306 aa).

Residues Met-1–Gln-1650 form a stem region. Leu-145–Ser-152 provides a ligand contact to ATP. Positions Lys-669–His-696 form a coiled coil. AAA stretches follow at residues Tyr-1651–Gly-1875, Ser-1941–Asp-2161, Leu-2249–Gly-2505, and His-2617–Lys-2862. ATP is bound by residues Gly-1689–Thr-1696, Gly-1979–Ser-1986, Gly-2291–Gly-2298, and Gly-2655–Arg-2662. Positions Ala-2880–Ile-3168 are stalk. Coiled-coil stretches lie at residues Leu-2896–Gln-2981, Leu-3108–Leu-3199, and Ile-3407–Glu-3441. AAA regions lie at residues Leu-3243–Asp-3472 and Met-3689–Arg-3904.

It belongs to the dynein heavy chain family. The cytoplasmic dynein complex 2 is probably composed by a heavy chain DYNC2H1 homodimer and a number of DYNC2LI1 light intermediate chains. As to expression, detected in brain, lung, spleen and kidney (at protein level). Enriched in the ependymal layer lining the lateral ventricles (at protein level).

Its subcellular location is the cytoplasm. The protein localises to the cytoskeleton. The protein resides in the cilium axoneme. It is found in the cell membrane. May function as a motor for intraflagellar retrograde transport. Functions in cilia biogenesis. According to PubMed:8666668, it may play a role in transport between endoplasmic reticulum and Golgi or organization of the Golgi in cells. In Mus musculus (Mouse), this protein is Cytoplasmic dynein 2 heavy chain 1 (Dync2h1).